The chain runs to 567 residues: Proline--tRNA ligase (567 aa).

This sequence belongs to the class-II aminoacyl-tRNA synthetase family. ProS type 1 subfamily. As to quaternary structure, homodimer.

The protein localises to the cytoplasm. The catalysed reaction is tRNA(Pro) + L-proline + ATP = L-prolyl-tRNA(Pro) + AMP + diphosphate. Catalyzes the attachment of proline to tRNA(Pro) in a two-step reaction: proline is first activated by ATP to form Pro-AMP and then transferred to the acceptor end of tRNA(Pro). As ProRS can inadvertently accommodate and process non-cognate amino acids such as alanine and cysteine, to avoid such errors it has two additional distinct editing activities against alanine. One activity is designated as 'pretransfer' editing and involves the tRNA(Pro)-independent hydrolysis of activated Ala-AMP. The other activity is designated 'posttransfer' editing and involves deacylation of mischarged Ala-tRNA(Pro). The misacylated Cys-tRNA(Pro) is not edited by ProRS. The polypeptide is Proline--tRNA ligase (Stenotrophomonas maltophilia (strain R551-3)).